The chain runs to 193 residues: Holliday junction branch migration complex subunit RuvA (193 aa).

Positions 1–64 (MIGRIAGTLI…EDAHLLYGFG (64 aa)) are domain I. The domain II stretch occupies residues 65–143 (SAAERNTFRE…AELGHAPGAA (79 aa)). The flexible linker stretch occupies residues 144 to 151 (PVHDSAVD). The tract at residues 151 to 193 (DILNALLALGYSEKEAATAIKQVPAGTGVSDGIKLALKALSKA) is domain III.

This sequence belongs to the RuvA family. Homotetramer. Forms an RuvA(8)-RuvB(12)-Holliday junction (HJ) complex. HJ DNA is sandwiched between 2 RuvA tetramers; dsDNA enters through RuvA and exits via RuvB. An RuvB hexamer assembles on each DNA strand where it exits the tetramer. Each RuvB hexamer is contacted by two RuvA subunits (via domain III) on 2 adjacent RuvB subunits; this complex drives branch migration. In the full resolvosome a probable DNA-RuvA(4)-RuvB(12)-RuvC(2) complex forms which resolves the HJ.

It localises to the cytoplasm. Functionally, the RuvA-RuvB-RuvC complex processes Holliday junction (HJ) DNA during genetic recombination and DNA repair, while the RuvA-RuvB complex plays an important role in the rescue of blocked DNA replication forks via replication fork reversal (RFR). RuvA specifically binds to HJ cruciform DNA, conferring on it an open structure. The RuvB hexamer acts as an ATP-dependent pump, pulling dsDNA into and through the RuvAB complex. HJ branch migration allows RuvC to scan DNA until it finds its consensus sequence, where it cleaves and resolves the cruciform DNA. This chain is Holliday junction branch migration complex subunit RuvA, found in Cupriavidus pinatubonensis (strain JMP 134 / LMG 1197) (Cupriavidus necator (strain JMP 134)).